Reading from the N-terminus, the 192-residue chain is MKNKVVVVTGVPGVGGTTVTQKAMDILSEEGLTYKMVNFGSAMFDVANEEGIASDRDQMRKLDPETQKRIQKMAGRKIAEMAKESPVAVDTHSTVKTPKGYLPGLPAWVLTELNPDIVIVVETDGDEILMRRLSDESRKRDLETTASIEEHQFMNRAAAMSYGVLTGATVKIVKNKNGLVDNAVEELISVLR.

Position 10–18 (10–18) interacts with ATP; the sequence is GVPGVGGTT.

The protein belongs to the archaeal adenylate kinase family. In terms of assembly, monomer.

The protein localises to the cytoplasm. The enzyme catalyses AMP + ATP = 2 ADP. The protein is Adenylate kinase of Methanococcus maripaludis (strain C5 / ATCC BAA-1333).